Consider the following 296-residue polypeptide: Probable endonuclease 4 (296 aa).

Zn(2+) is bound by residues His-68, His-109, Glu-144, Asp-178, His-181, His-213, Asp-226, His-228, and Glu-258.

This sequence belongs to the AP endonuclease 2 family. It depends on Zn(2+) as a cofactor.

It catalyses the reaction Endonucleolytic cleavage to 5'-phosphooligonucleotide end-products.. Endonuclease IV plays a role in DNA repair. It cleaves phosphodiester bonds at apurinic or apyrimidinic (AP) sites, generating a 3'-hydroxyl group and a 5'-terminal sugar phosphate. The sequence is that of Probable endonuclease 4 from Staphylococcus aureus (strain Mu3 / ATCC 700698).